The primary structure comprises 199 residues: CASP-like protein 1B2 (199 aa).

Over 1–22 (MALQSEEKLEVGYSSLQPKTRK) the chain is Cytoplasmic. Residues 23-43 (WVLLMLRVLAFFATAAATVVM) traverse the membrane as a helical segment. Topologically, residues 44 to 74 (GLNKETKTLVVATVGSTPIKASLAAKFQHTP) are extracellular. Residues 75-95 (AFVFFVIANGLASIHNLVMIM) form a helical membrane-spanning segment. At 96–112 (GDLFGQKLDYKGLRLAM) the chain is on the cytoplasmic side. The chain crosses the membrane as a helical span at residues 113 to 133 (IAILDMMTVALVSGGVSAAAF). Residues 134–163 (MAELGKNGNSHARWNKICDKFETFCDHGGG) lie on the Extracellular side of the membrane. Residues 164–184 (ALIASFAGLILMLIISVMSII) traverse the membrane as a helical segment. Residues 185–199 (KLLIKPKPDSTIVVP) lie on the Cytoplasmic side of the membrane.

This sequence belongs to the Casparian strip membrane proteins (CASP) family. Homodimer and heterodimers.

Its subcellular location is the cell membrane. The sequence is that of CASP-like protein 1B2 from Populus trichocarpa (Western balsam poplar).